Consider the following 315-residue polypeptide: Methionyl-tRNA formyltransferase (315 aa).

113–116 (SLLP) contacts (6S)-5,6,7,8-tetrahydrofolate.

It belongs to the Fmt family.

The enzyme catalyses L-methionyl-tRNA(fMet) + (6R)-10-formyltetrahydrofolate = N-formyl-L-methionyl-tRNA(fMet) + (6S)-5,6,7,8-tetrahydrofolate + H(+). Functionally, attaches a formyl group to the free amino group of methionyl-tRNA(fMet). The formyl group appears to play a dual role in the initiator identity of N-formylmethionyl-tRNA by promoting its recognition by IF2 and preventing the misappropriation of this tRNA by the elongation apparatus. This Escherichia coli (strain SE11) protein is Methionyl-tRNA formyltransferase.